A 571-amino-acid polypeptide reads, in one-letter code: Cilia- and flagella-associated protein 52 (571 aa).

10 WD repeats span residues 62-106, 109-150, 156-195, 288-327, 330-364, 366-405, 410-449, 451-490, 494-533, and 536-571; these read GHGN…LLAR, LHKG…AICG, LNVG…RKIW, QSQG…ETLI, CHFE…TSSN, AHRI…QKLE, EHKS…RNQM, LANT…VIRE, SLSG…VTHV, and GHSG…PYTS.

The protein belongs to the CFAP52 family. In terms of assembly, microtubule inner protein component of sperm flagellar doublet microtubules. Interacts with BRCA2. Interacts with the CCT chaperonin complex. Interacts with HSP70. Interacts with AK8. Interacts with CFAP45. Interacts with DNAI1. Interacts with IQDC.

It is found in the cytoplasm. The protein resides in the cytoskeleton. The protein localises to the cilium axoneme. Its subcellular location is the flagellum axoneme. Microtubule inner protein (MIP) part of the dynein-decorated doublet microtubules (DMTs) in cilia axoneme. Important for proper ciliary and flagellar beating. May act in cooperation with CFAP45 and axonemal dynein subunit DNAH11. May play a role in cell growth and/or survival. In Macaca fascicularis (Crab-eating macaque), this protein is Cilia- and flagella-associated protein 52.